Here is a 304-residue protein sequence, read N- to C-terminus: Tyrosine recombinase XerD (304 aa).

The Core-binding (CB) domain occupies 6-91 (EPWRKTLETF…AIRSFHKFLL (86 aa)). One can recognise a Tyr recombinase domain in the interval 112 to 298 (YLPSVLTIEE…DRSFIKEVHK (187 aa)). Residues Arg155, Lys179, His250, Arg253, and His276 contribute to the active site. Tyr285 serves as the catalytic O-(3'-phospho-DNA)-tyrosine intermediate.

This sequence belongs to the 'phage' integrase family. XerD subfamily. As to quaternary structure, forms a cyclic heterotetrameric complex composed of two molecules of XerC and two molecules of XerD.

The protein localises to the cytoplasm. Functionally, site-specific tyrosine recombinase, which acts by catalyzing the cutting and rejoining of the recombining DNA molecules. The XerC-XerD complex is essential to convert dimers of the bacterial chromosome into monomers to permit their segregation at cell division. It also contributes to the segregational stability of plasmids. The protein is Tyrosine recombinase XerD of Chlorobaculum tepidum (strain ATCC 49652 / DSM 12025 / NBRC 103806 / TLS) (Chlorobium tepidum).